A 1052-amino-acid polypeptide reads, in one-letter code: CCAAT/enhancer-binding protein zeta (1052 aa).

3 disordered regions span residues 1–40 (MSADQEPVAFLAKQPWRPKQVTEDPDEEDEEDGDEGKNGF), 122–158 (VENKKQKATEGKKTSEKKVKNKTVAEQRPESCPVSKA), and 621–677 (SQLD…AEKP). A compositionally biased stretch (acidic residues) spans 23–34 (EDPDEEDEEDGD). Basic and acidic residues predominate over residues 122–150 (VENKKQKATEGKKTSEKKVKNKTVAEQRP). Positions 627–643 (PESDEENFVDVGDDSDD) are enriched in acidic residues. 2 positions are modified to phosphoserine: S629 and S641. The span at 644-677 (EKFTDADKGTATDAVKEVESKETEPESSAEAEKP) shows a compositional bias: basic and acidic residues. S837 carries the post-translational modification Phosphoserine. The tract at residues 876–969 (KGAKADLEDS…QGQKKKKKSF (94 aa)) is disordered. Positions 883-932 (EDSESSDGELGDLDDDEVSLGSMNDEDFEIDEDGGTFMDVSDDESEDAPE) are enriched in acidic residues. A phosphoserine mark is found at S958, S972, and S977. Positions 1032–1052 (KKKKNFRKKMKAPQKPKRQRK) are disordered.

The protein belongs to the CBF/MAK21 family. As to expression, ubiquitous.

The protein resides in the nucleus. Stimulates transcription from the HSP70 promoter. This is CCAAT/enhancer-binding protein zeta (Cebpz) from Mus musculus (Mouse).